The primary structure comprises 97 residues: YcgL domain-containing protein APP7_0754 (97 aa).

The YcgL domain occupies 6–90 (NLCAIYKSPK…PPENLLKTFL (85 aa)).

The sequence is that of YcgL domain-containing protein APP7_0754 from Actinobacillus pleuropneumoniae serotype 7 (strain AP76).